We begin with the raw amino-acid sequence, 486 residues long: Glutamyl-tRNA(Gln) amidotransferase subunit A (486 aa).

Active-site charge relay system residues include lysine 74 and serine 149. Catalysis depends on serine 173, which acts as the Acyl-ester intermediate.

Belongs to the amidase family. GatA subfamily. Heterotrimer of A, B and C subunits.

It catalyses the reaction L-glutamyl-tRNA(Gln) + L-glutamine + ATP + H2O = L-glutaminyl-tRNA(Gln) + L-glutamate + ADP + phosphate + H(+). Functionally, allows the formation of correctly charged Gln-tRNA(Gln) through the transamidation of misacylated Glu-tRNA(Gln) in organisms which lack glutaminyl-tRNA synthetase. The reaction takes place in the presence of glutamine and ATP through an activated gamma-phospho-Glu-tRNA(Gln). The sequence is that of Glutamyl-tRNA(Gln) amidotransferase subunit A from Prochlorococcus marinus (strain SARG / CCMP1375 / SS120).